The following is a 429-amino-acid chain: 3-phosphoshikimate 1-carboxyvinyltransferase (429 aa).

The 3-phosphoshikimate site is built by Lys-23, Ser-24, and Arg-28. Lys-23 is a phosphoenolpyruvate binding site. Phosphoenolpyruvate contacts are provided by Gly-95 and Arg-123. The 3-phosphoshikimate site is built by Ser-168, Gln-170, Asp-316, and Lys-343. Gln-170 contributes to the phosphoenolpyruvate binding site. The active-site Proton acceptor is the Asp-316. Phosphoenolpyruvate-binding residues include Arg-347 and Arg-389.

The protein belongs to the EPSP synthase family. In terms of assembly, monomer.

It localises to the cytoplasm. The catalysed reaction is 3-phosphoshikimate + phosphoenolpyruvate = 5-O-(1-carboxyvinyl)-3-phosphoshikimate + phosphate. The protein operates within metabolic intermediate biosynthesis; chorismate biosynthesis; chorismate from D-erythrose 4-phosphate and phosphoenolpyruvate: step 6/7. Catalyzes the transfer of the enolpyruvyl moiety of phosphoenolpyruvate (PEP) to the 5-hydroxyl of shikimate-3-phosphate (S3P) to produce enolpyruvyl shikimate-3-phosphate and inorganic phosphate. This Bacillus cereus (strain B4264) protein is 3-phosphoshikimate 1-carboxyvinyltransferase.